Reading from the N-terminus, the 766-residue chain is Phospholipid phosphatase-related protein type 4 (766 aa).

At Ser-37 the chain carries Phosphoserine. 4 consecutive transmembrane segments (helical) span residues Leu-68–Phe-88, Ala-120–Val-140, Phe-179–Leu-199, and Ser-248–Phe-268. Residue Asn-269 is glycosylated (N-linked (GlcNAc...) asparagine). The next 2 helical transmembrane spans lie at Lys-277 to Thr-297 and Val-309 to Gly-329. Ser-347 bears the Phosphoserine mark. N-linked (GlcNAc...) asparagine glycosylation occurs at Asn-363. At Ser-386 the chain carries Phosphoserine. N-linked (GlcNAc...) asparagine glycosylation is present at Asn-433. Ser-439 bears the Phosphoserine mark. Disordered stretches follow at residues Ser-454–Tyr-503 and Thr-510–Arg-529. Asn-456 carries an N-linked (GlcNAc...) asparagine glycan. 2 positions are modified to phosphoserine: Ser-462 and Ser-474. N-linked (GlcNAc...) asparagine glycans are attached at residues Asn-515 and Asn-545. Residue Ser-608 is modified to Phosphoserine. Disordered regions lie at residues Pro-634–Ala-654, Asp-672–Thr-705, and Pro-741–Asp-766. The segment covering Arg-688 to Gly-702 has biased composition (basic residues). Residues Arg-743–Asn-752 are compositionally biased toward polar residues.

The protein belongs to the PA-phosphatase related phosphoesterase family. O-glycosylated. Probably at Ser-347. Specifically expressed in neurons (at protein level).

Its subcellular location is the postsynaptic density membrane. Functionally, postsynaptic density membrane protein that indirectly regulates glutamatergic synaptic transmission through lysophosphatidic acid (LPA)-mediated signaling pathways. Binds lysophosphatidic acid (LPA) and mediates its internalization into cells. Could act as receptor or a transporter of this lipid at the post-synaptic membrane. Modulates lysophosphatidic acid (LPA) activity in neuron axonal outgrowth during development by attenuating phospholipid-induced axon collapse. The chain is Phospholipid phosphatase-related protein type 4 from Rattus norvegicus (Rat).